Reading from the N-terminus, the 732-residue chain is Ets DNA-binding protein pokkuri (732 aa).

In terms of domain architecture, PNT spans 33 to 117; sequence SSQLAELKTQ…NVLQMLIIES (85 aa). A disordered region spans residues 133–295; sequence SRYPLSPHSH…PPGTPILKDI (163 aa). Residues 141-157 are compositionally biased toward pro residues; it reads SHPPTPTWPPLNAPPEN. A compositionally biased stretch (polar residues) spans 176-193; the sequence is NSVTLSPPPSVDSQASSP. Residues 205–240 are compositionally biased toward low complexity; the sequence is GAAPGSAGGSAPAAGGATNTSNPTSSSASSTGSNGS. The segment at residues 396–479 is a DNA-binding region (ETS); that stretch reads RLLWDFLQQL…QGERHCYQFL (84 aa). Disordered stretches follow at residues 496-548, 590-647, and 674-732; these read QSTP…NGPM, GPPP…TATS, and VAAS…HMQQ. Over residues 506–539 the composition is skewed to low complexity; it reads SPSMPQGSSQAPGSPAGQNWNPQQQSQQQQQSPQ. Phosphoserine is present on Ser543. Positions 637-647 are enriched in polar residues; it reads LSVSSKSTATS. Phosphoserine is present on residues Ser677, Ser682, and Ser696. Polar residues predominate over residues 690 to 709; sequence AGASNASSSPRPMDQASEQA.

The protein belongs to the ETS family. Post-translationally, phosphorylated in response to MAPK signaling. May be phosphorylated by rl. As to expression, expressed in R7 and cone cells of the eye.

The protein resides in the nucleus. Its function is as follows. Ets-related protein that functions as a negative regulator of photoreceptor development acting antagonistically to pnt and the proneural signal mediated by RAS. It acts upstream of SINA to inhibit R7 development. The chain is Ets DNA-binding protein pokkuri (aop) from Drosophila melanogaster (Fruit fly).